The sequence spans 97 residues: MTDLRHYDVIVSPVITEKSTIVSEHNQVVFNVARKATKPEIKAAVEALFGVKVTAVNTAVRKGKVKRFRGLVGRQSDVKKAIVTLAEGQSIDVSTGL.

It belongs to the universal ribosomal protein uL23 family. In terms of assembly, part of the 50S ribosomal subunit. Contacts protein L29, and trigger factor when it is bound to the ribosome.

Its function is as follows. One of the early assembly proteins it binds 23S rRNA. One of the proteins that surrounds the polypeptide exit tunnel on the outside of the ribosome. Forms the main docking site for trigger factor binding to the ribosome. The polypeptide is Large ribosomal subunit protein uL23 (Brucella abortus (strain S19)).